The chain runs to 431 residues: Tol-Pal system protein TolB (431 aa).

The first 18 residues, 1–18 (MKALLLSLLLLLPVVALA), serve as a signal peptide directing secretion. The disordered stretch occupies residues 410–431 (LPLRTEKGTYQTPDWSPLPQAQ).

This sequence belongs to the TolB family. The Tol-Pal system is composed of five core proteins: the inner membrane proteins TolA, TolQ and TolR, the periplasmic protein TolB and the outer membrane protein Pal. They form a network linking the inner and outer membranes and the peptidoglycan layer.

The protein localises to the periplasm. Part of the Tol-Pal system, which plays a role in outer membrane invagination during cell division and is important for maintaining outer membrane integrity. In Myxococcus xanthus, this protein is Tol-Pal system protein TolB.